Here is a 105-residue protein sequence, read N- to C-terminus: Small ribosomal subunit protein uS10 (105 aa).

Belongs to the universal ribosomal protein uS10 family. In terms of assembly, part of the 30S ribosomal subunit.

Involved in the binding of tRNA to the ribosomes. The chain is Small ribosomal subunit protein uS10 from Crocosphaera subtropica (strain ATCC 51142 / BH68) (Cyanothece sp. (strain ATCC 51142)).